A 398-amino-acid chain; its full sequence is MILNIRLDHKTSDVKTMETASGRIEEIVGELEALGAVTEKVPLMTCNRVEYYLHVTGVPPEFDFNGFTVEKDEDALLHLLRLASGLESMIIGEDQILGQIKAARLQALREGTCGPLLDMVFTKAVHVGQTVRRKTKINRGSVSIGSAAVDLAESIHGDLKCKKVLVIGAGKMGTLVARALAEKHLKAIMVANRTYERAYQLACELGGDAIHFDRLNRALRDADVVISATGSPHYILTRERVMDAVPPERRSSIVMVDIANPRDIEESVRELGVRLFTIDDLRGVAEENRKRREAEAREAEGIVRAELELLLRAMKHREVEPLLAEIRGRMESLRQREAGKAIKKIENSKDPERVVEGLTRSIVDKIFHDIALKIRDAAERDDREFLRMCSELFDCDES.

Residues 45–48, Ser88, 93–95, and Gln99 each bind substrate; these read TCNR and EDQ. The active-site Nucleophile is the Cys46. 168-173 is a binding site for NADP(+); that stretch reads GAGKMG.

It belongs to the glutamyl-tRNA reductase family. As to quaternary structure, homodimer.

The catalysed reaction is (S)-4-amino-5-oxopentanoate + tRNA(Glu) + NADP(+) = L-glutamyl-tRNA(Glu) + NADPH + H(+). It participates in porphyrin-containing compound metabolism; protoporphyrin-IX biosynthesis; 5-aminolevulinate from L-glutamyl-tRNA(Glu): step 1/2. Catalyzes the NADPH-dependent reduction of glutamyl-tRNA(Glu) to glutamate 1-semialdehyde (GSA). In Methanothermobacter marburgensis (strain ATCC BAA-927 / DSM 2133 / JCM 14651 / NBRC 100331 / OCM 82 / Marburg) (Methanobacterium thermoautotrophicum), this protein is Glutamyl-tRNA reductase (hemA).